We begin with the raw amino-acid sequence, 234 residues long: NLP effector protein 10 (234 aa).

Residues Met1 to Ala17 form the signal peptide. A glycan (N-linked (GlcNAc...) asparagine) is linked at Asn65. Positions Ala101–Asp111 match the Conserved undecapeptide motif I motif. The short motif at Gly118–Glu124 is the Hepta-peptide GHRHDWE motif II element.

The protein belongs to the Necrosis inducing protein (NPP1) family.

It localises to the secreted. Its function is as follows. Secreted effector that contributes moderately to virulence during infection by P.capsici. Does not cause visible reaction of C.annuum for several days after inoculation, but by 7 days after inoculation, small necrotic lesions become visible. Leads only to chlorotic areas, without necrosis at 7 days after non-host N.benthamiana leaves infection. This Phytophthora capsici protein is NLP effector protein 10.